Consider the following 195-residue polypeptide: Imidazoleglycerol-phosphate dehydratase (195 aa).

The protein belongs to the imidazoleglycerol-phosphate dehydratase family.

Its subcellular location is the cytoplasm. It carries out the reaction D-erythro-1-(imidazol-4-yl)glycerol 3-phosphate = 3-(imidazol-4-yl)-2-oxopropyl phosphate + H2O. The protein operates within amino-acid biosynthesis; L-histidine biosynthesis; L-histidine from 5-phospho-alpha-D-ribose 1-diphosphate: step 6/9. This Paraburkholderia phytofirmans (strain DSM 17436 / LMG 22146 / PsJN) (Burkholderia phytofirmans) protein is Imidazoleglycerol-phosphate dehydratase.